The following is a 155-amino-acid chain: Small ribosomal subunit protein uS7c (155 aa).

This sequence belongs to the universal ribosomal protein uS7 family. In terms of assembly, part of the 30S ribosomal subunit.

The protein localises to the plastid. Its subcellular location is the chloroplast. Its function is as follows. One of the primary rRNA binding proteins, it binds directly to 16S rRNA where it nucleates assembly of the head domain of the 30S subunit. This chain is Small ribosomal subunit protein uS7c (rps7), found in Canella winterana (Wild cinnamon).